Consider the following 1354-residue polypeptide: Tensin homolog (1354 aa).

The 170-residue stretch at 38–207 (MKDRKEGVQV…GYFSSLLSGR (170 aa)) folds into the Phosphatase tensin-type domain. Residue cysteine 144 is the Phosphocysteine intermediate of the active site. Residues 212–337 (SDPLYLHNII…VTVELVVSHT (126 aa)) enclose the C2 tensin-type domain. Disordered regions lie at residues 380–442 (EYSE…DVVP), 597–616 (STLQ…RTLN), 638–660 (SNTA…SVQL), 692–720 (DVRG…NNTP), 734–754 (SVTT…EADA), 794–879 (AANN…DRQR), and 1015–1035 (NGER…HNGY). Positions 391–401 (SSKSANPINNN) are enriched in polar residues. Residues 408–417 (VGPPVPPKPS) are compositionally biased toward pro residues. 3 stretches are compositionally biased toward polar residues: residues 704–720 (HNAS…NNTP), 734–747 (SVTT…STPS), and 794–804 (AANNDENQHNL). Positions 821–843 (AEFRREEERLRNTRSPYGEERWR) are enriched in basic and acidic residues. A compositionally biased stretch (gly residues) spans 1017–1033 (ERGGSGHAAGGGGGGHN). Residues 1083–1187 (WYKPTISREQ…ALPTKLVLPD (105 aa)) form the SH2 domain. In terms of domain architecture, PTB spans 1209–1353 (ACNVVYVGSV…NKVMLAQKNR (145 aa)).

This sequence belongs to the PTEN phosphatase protein family. As to quaternary structure, may interact (via SH2 domain) with receptor svh-2 (when tyrosine-phosphorylated). May interact (via C-terminus) with integrin pat-3. Expressed in ventral motor neurons, including ventral and dorsal D-type neurons, and in a subset of cells in the head.

The protein localises to the cell projection. The protein resides in the axon. The enzyme catalyses O-phospho-L-tyrosyl-[protein] + H2O = L-tyrosyl-[protein] + phosphate. Probable phosphatase which regulates axon regeneration after injury by linking the svh-2 and integrin signaling pathways. Its function is as follows. Not involved in axon regeneration after injury. This chain is Tensin homolog, found in Caenorhabditis elegans.